Consider the following 94-residue polypeptide: Co-chaperonin GroES (94 aa).

The protein belongs to the GroES chaperonin family. In terms of assembly, heptamer of 7 subunits arranged in a ring. Interacts with the chaperonin GroEL.

The protein resides in the cytoplasm. Functionally, together with the chaperonin GroEL, plays an essential role in assisting protein folding. The GroEL-GroES system forms a nano-cage that allows encapsulation of the non-native substrate proteins and provides a physical environment optimized to promote and accelerate protein folding. GroES binds to the apical surface of the GroEL ring, thereby capping the opening of the GroEL channel. The polypeptide is Co-chaperonin GroES (Streptococcus pneumoniae (strain Taiwan19F-14)).